We begin with the raw amino-acid sequence, 77 residues long: Conodipine-M alpha chain (77 aa).

Glutamine 1 carries the post-translational modification Pyrrolidone carboxylic acid. Residue histidine 36 is part of the active site.

Heterodimer of an alpha and a beta chains; probably disulfide-linked. It depends on Ca(2+) as a cofactor. Expressed by the venom duct.

The protein localises to the secreted. It catalyses the reaction a 1,2-diacyl-sn-glycero-3-phosphocholine + H2O = a 1-acyl-sn-glycero-3-phosphocholine + a fatty acid + H(+). Inhibited by linoleoyl amide and MG14. Functionally, heterodimer: conodipine-M catalyzes the calcium-dependent hydrolysis of the 2-acyl groups in 3-sn-phosphoglycerides. This activity may be supported by the alpha chain. Conodipine-M inhibits the binding of isradipine (a ligand specific for L-type calcium channel) to L-type calcium channels. The polypeptide is Conodipine-M alpha chain (Conus magus (Magical cone)).